The following is a 486-amino-acid chain: Cardiolipin synthase A (486 aa).

2 helical membrane passes run 3–23 (TFYTVVNWLVILGYWLLIAGV) and 38–58 (MAWLLIIYILPLVGIIAYLSF). 2 consecutive PLD phosphodiesterase domains span residues 219–246 (MDLRQHRKMVMIDNYIAYTGSMNMVDPR) and 399–426 (EGGLLHTKSVLVDGELSLVGTVNLDMRS). Active-site residues include histidine 224, lysine 226, aspartate 231, histidine 404, lysine 406, and aspartate 411.

The protein belongs to the phospholipase D family. Cardiolipin synthase subfamily. ClsA sub-subfamily.

It localises to the cell inner membrane. The catalysed reaction is 2 a 1,2-diacyl-sn-glycero-3-phospho-(1'-sn-glycerol) = a cardiolipin + glycerol. Its function is as follows. Catalyzes the reversible phosphatidyl group transfer from one phosphatidylglycerol molecule to another to form cardiolipin (CL) (diphosphatidylglycerol) and glycerol. This is Cardiolipin synthase A from Klebsiella pneumoniae subsp. pneumoniae (strain ATCC 700721 / MGH 78578).